A 394-amino-acid chain; its full sequence is Elongation factor Tu (394 aa).

In terms of domain architecture, tr-type G spans 10–204 (KAHVNIGTIG…SVDSYIPTPT (195 aa)). Positions 19–26 (GHIDHGKT) are G1. 19–26 (GHIDHGKT) lines the GTP pocket. Thr-26 lines the Mg(2+) pocket. The segment at 60–64 (GITIN) is G2. The interval 81–84 (DCPG) is G3. GTP is bound by residues 81 to 85 (DCPGH) and 136 to 139 (NKCD). The G4 stretch occupies residues 136-139 (NKCD). The G5 stretch occupies residues 174-176 (SAL).

It belongs to the TRAFAC class translation factor GTPase superfamily. Classic translation factor GTPase family. EF-Tu/EF-1A subfamily. Monomer.

It is found in the cytoplasm. The enzyme catalyses GTP + H2O = GDP + phosphate + H(+). GTP hydrolase that promotes the GTP-dependent binding of aminoacyl-tRNA to the A-site of ribosomes during protein biosynthesis. This is Elongation factor Tu from Malacoplasma penetrans (strain HF-2) (Mycoplasma penetrans).